The chain runs to 341 residues: tRNA N6-adenosine threonylcarbamoyltransferase (341 aa).

Residues His-111 and His-115 each coordinate Fe cation. Residues 134–138, Asp-167, Gly-180, and Asn-272 each bind substrate; that span reads LVSGG. Asp-300 provides a ligand contact to Fe cation.

This sequence belongs to the KAE1 / TsaD family. Fe(2+) is required as a cofactor.

The protein localises to the cytoplasm. The enzyme catalyses L-threonylcarbamoyladenylate + adenosine(37) in tRNA = N(6)-L-threonylcarbamoyladenosine(37) in tRNA + AMP + H(+). Required for the formation of a threonylcarbamoyl group on adenosine at position 37 (t(6)A37) in tRNAs that read codons beginning with adenine. Is involved in the transfer of the threonylcarbamoyl moiety of threonylcarbamoyl-AMP (TC-AMP) to the N6 group of A37, together with TsaE and TsaB. TsaD likely plays a direct catalytic role in this reaction. In Blochmanniella pennsylvanica (strain BPEN), this protein is tRNA N6-adenosine threonylcarbamoyltransferase.